Consider the following 553-residue polypeptide: CTP synthase (553 aa).

The segment at 1-270 (MTKYVFVTGG…DRLICEELRL (270 aa)) is amidoligase domain. Residue Ser13 coordinates CTP. Ser13 contacts UTP. Residues 14 to 19 (SLGKGI) and Asp71 each bind ATP. 2 residues coordinate Mg(2+): Asp71 and Glu144. Residues 151–153 (DIE), 191–196 (KTKPTQ), and Lys227 contribute to the CTP site. Residues 191-196 (KTKPTQ) and Lys227 contribute to the UTP site. One can recognise a Glutamine amidotransferase type-1 domain in the interval 295-547 (TIGMVGKYVD…VQAALACQQT (253 aa)). Gly356 is an L-glutamine binding site. Residue Cys383 is the Nucleophile; for glutamine hydrolysis of the active site. L-glutamine is bound by residues 384–387 (LGMQ), Glu407, and Arg473. Residues His520 and Glu522 contribute to the active site.

Belongs to the CTP synthase family. In terms of assembly, homotetramer.

The catalysed reaction is UTP + L-glutamine + ATP + H2O = CTP + L-glutamate + ADP + phosphate + 2 H(+). It carries out the reaction L-glutamine + H2O = L-glutamate + NH4(+). It catalyses the reaction UTP + NH4(+) + ATP = CTP + ADP + phosphate + 2 H(+). It participates in pyrimidine metabolism; CTP biosynthesis via de novo pathway; CTP from UDP: step 2/2. Its activity is regulated as follows. Allosterically activated by GTP, when glutamine is the substrate; GTP has no effect on the reaction when ammonia is the substrate. The allosteric effector GTP functions by stabilizing the protein conformation that binds the tetrahedral intermediate(s) formed during glutamine hydrolysis. Inhibited by the product CTP, via allosteric rather than competitive inhibition. In terms of biological role, catalyzes the ATP-dependent amination of UTP to CTP with either L-glutamine or ammonia as the source of nitrogen. Regulates intracellular CTP levels through interactions with the four ribonucleotide triphosphates. The protein is CTP synthase of Burkholderia mallei (strain NCTC 10229).